Reading from the N-terminus, the 601-residue chain is MSGRRNETAIRELVQSVSGNNLCADCSTRGVQWASWNLGIFLCLRCATIHRKLGTHVSKVKSISLDEWSNDQIEKMKHWGNINANRYWNPNPLSHPLPTNALSDEHVMEKYIRDKYERKLFLDENHSTNSKPPSLPPRTKSSSQSSPMASTSTSKSRYADSLSTLHDMGFSDDSVNTHALEETNGDVTRAIEKIVQHGSSKPQKPSTLTSTKSTIKLVSARLKKRNKNLSVHFEDGTKPGDAYEVTGDTRAASPTLNPFEQMMAMTNQGMSVSPGVETTSSPFFTAPVEPNQPLQPLRPSMTGPVPSSMGSEATLNMPSTYGIDSNLYTNSNSSSIVQNPLQPARTGPAAINYNYTTNYSVSSPSVTNPFFDVGSSTQNASLMGSTGYPSSANNVYYENSYQGVGTSMSDNYQLPDMSKLSLNEQPAAPSNSNSQYMNTSMPTLDSTNMYGQSNQDPYSMSNGVYGSNYSAQPSTMQMQATGIAPPQPNMSMQMPMSMQSTGYQMPMENTWVDYNGMSQQGNGMQPATMNYSNSMGYDTNVPADNGYYQQGYGNVMMPPDASYTGTGSYVQPMNQPSGGMGAPADSSKADSYIQRIMQGKQ.

In terms of domain architecture, Arf-GAP spans 7 to 129 (ETAIRELVQS…LFLDENHSTN (123 aa)). Disordered stretches follow at residues 123–158 (DENH…KSRY) and 289–310 (EPNQ…SSMG). The segment covering 139 to 156 (TKSSSQSSPMASTSTSKS) has biased composition (low complexity). The UBA domain maps to 157–197 (RYADSLSTLHDMGFSDDSVNTHALEETNGDVTRAIEKIVQH).

This chain is UBA domain-containing protein 3 (ucp3), found in Schizosaccharomyces pombe (strain 972 / ATCC 24843) (Fission yeast).